The sequence spans 453 residues: D-aminoacyl-tRNA deacylase (453 aa).

Residues 428–453 (VRADVALHERPRERVRRPSDDEGKGN) form a disordered region.

The protein belongs to the DtdA deacylase family. In terms of assembly, monomer. The cofactor is Zn(2+).

It carries out the reaction a D-aminoacyl-tRNA + H2O = a tRNA + a D-alpha-amino acid + H(+). The enzyme catalyses glycyl-tRNA(Ala) + H2O = tRNA(Ala) + glycine + H(+). Functionally, D-aminoacyl-tRNA deacylase with broad substrate specificity. By recycling D-aminoacyl-tRNA to D-amino acids and free tRNA molecules, this enzyme counteracts the toxicity associated with the formation of D-aminoacyl-tRNA entities in vivo. The chain is D-aminoacyl-tRNA deacylase from Halobacterium salinarum (strain ATCC 29341 / DSM 671 / R1).